Consider the following 1098-residue polypeptide: Beta-alanine-activating enzyme (1098 aa).

ATP is bound by residues 198–206 (TSGTTGIPK), D428, R442, and K527. Residues 553–630 (EDLWEKLQYL…EIYNHILQTV (78 aa)) enclose the Carrier domain. At S589 the chain carries O-(pantetheine 4'-phosphoryl)serine. Phosphoserine is present on residues S649 and S724.

It belongs to the ATP-dependent AMP-binding enzyme family. Ubiquitously expressed in adult tissues.

Covalently binds beta-alanine in an ATP-dependent manner to form a thioester bond with its phosphopantetheine group and transfers it to an, as yet, unknown acceptor. May be required for a post-translational protein modification or for post-transcriptional modification of an RNA. The protein is Beta-alanine-activating enzyme (AASDH) of Homo sapiens (Human).